Consider the following 297-residue polypeptide: Protease HtpX homolog (297 aa).

Helical transmembrane passes span 5–25 (IFLFILTNLLVITTIGIVLTI) and 43–63 (LMALLVFSLVVGFVGSFISLG). Histidine 154 provides a ligand contact to Zn(2+). Glutamate 155 is an active-site residue. Histidine 158 provides a ligand contact to Zn(2+). Helical transmembrane passes span 169–189 (LLQGIVNTFVVFLSRIAAWVA) and 203–223 (FIAMIVFQIIFSILGSLVVFA). Glutamate 229 is a binding site for Zn(2+).

Belongs to the peptidase M48B family. It depends on Zn(2+) as a cofactor.

The protein localises to the cell membrane. The protein is Protease HtpX homolog of Bacillus velezensis (strain DSM 23117 / BGSC 10A6 / LMG 26770 / FZB42) (Bacillus amyloliquefaciens subsp. plantarum).